The primary structure comprises 172 residues: Small ribosomal subunit protein uS5 (172 aa).

The S5 DRBM domain maps to 17–80; sequence LREKMISVNR…EQARRNMFKV (64 aa).

The protein belongs to the universal ribosomal protein uS5 family. As to quaternary structure, part of the 30S ribosomal subunit. Contacts proteins S4 and S8.

In terms of biological role, with S4 and S12 plays an important role in translational accuracy. Located at the back of the 30S subunit body where it stabilizes the conformation of the head with respect to the body. This is Small ribosomal subunit protein uS5 from Paraburkholderia phymatum (strain DSM 17167 / CIP 108236 / LMG 21445 / STM815) (Burkholderia phymatum).